Reading from the N-terminus, the 180-residue chain is Cell division protein ZapC (180 aa).

It belongs to the ZapC family. Interacts directly with FtsZ.

The protein resides in the cytoplasm. Functionally, contributes to the efficiency of the cell division process by stabilizing the polymeric form of the cell division protein FtsZ. Acts by promoting interactions between FtsZ protofilaments and suppressing the GTPase activity of FtsZ. This Vibrio cholerae serotype O1 (strain ATCC 39315 / El Tor Inaba N16961) protein is Cell division protein ZapC.